Here is a 574-residue protein sequence, read N- to C-terminus: NADH-ubiquinone oxidoreductase chain 5 (574 aa).

16 helical membrane passes run 10–30 (VASKLMWVIFTGMLAPTLYMV), 50–70 (MMMTIILDPLGLMFSCTVVMI), 87–107 (FINRFTVLVLLFVLSMNMLIF), 111–131 (LIILLLGWDGLGIVSFILVIY), 141–161 (GMITALTNRIGDVMLLLAIAW), 181–203 (YQALVIIIAAMTKSAQMPFSSWL), 211–231 (TPVSALVHSSTLVTAGVFLLI), 240–260 (VWWFTTFLLFVAVSTTLMAGL), 280–300 (LGMMMAAMGLGMAHMAFFHMV), 301–321 (THAMFKALLFVCAGSFIHSHM), 340–360 (TSCLIMANLALCGFPFMSGFY), 381–401 (LILFAVGLTAFYSTRFTMCVV), 423–443 (MLLLASMSVISGSALTWILPL), 458–478 (TLMLVTLGALMSWFFLTTTNM), 489–509 (IINYFSCTMWFLVPLSSQFMM), and 554–574 (TPMNYLMMSSMLLLVATLVAI).

The protein belongs to the complex I subunit 5 family.

Its subcellular location is the mitochondrion inner membrane. It carries out the reaction a ubiquinone + NADH + 5 H(+)(in) = a ubiquinol + NAD(+) + 4 H(+)(out). Core subunit of the mitochondrial membrane respiratory chain NADH dehydrogenase (Complex I) that is believed to belong to the minimal assembly required for catalysis. Complex I functions in the transfer of electrons from NADH to the respiratory chain. The immediate electron acceptor for the enzyme is believed to be ubiquinone. This is NADH-ubiquinone oxidoreductase chain 5 (ND5) from Lumbricus terrestris (Common earthworm).